Reading from the N-terminus, the 128-residue chain is Large ribosomal subunit protein bL17 (128 aa).

This sequence belongs to the bacterial ribosomal protein bL17 family. Part of the 50S ribosomal subunit. Contacts protein L32.

In Edwardsiella ictaluri (strain 93-146), this protein is Large ribosomal subunit protein bL17.